We begin with the raw amino-acid sequence, 244 residues long: Extracellular superoxide dismutase [Cu-Zn] (244 aa).

The first 15 residues, 1-15 (MVAFLFCNLLLVACG), serve as a signal peptide directing secretion. Intrachain disulfides connect Cys70–Cys215 and Cys132–Cys214. The N-linked (GlcNAc...) asparagine glycan is linked to Asn114. Positions 121, 123, and 138 each coordinate Cu cation. The Zn(2+) site is built by His138, His146, His149, and Asp152. Residue His188 coordinates Cu cation. Positions 224–244 (AWESQTKERKKRRRESECKTT) are disordered.

Belongs to the Cu-Zn superoxide dismutase family. In terms of assembly, homodimer. Interacts with ATP7A; this interaction is copper-dependent and is required for SOD3 activity. The cofactor is Cu cation. Zn(2+) serves as cofactor.

It is found in the secreted. It localises to the extracellular space. The protein localises to the golgi apparatus. Its subcellular location is the trans-Golgi network. It carries out the reaction 2 superoxide + 2 H(+) = H2O2 + O2. Functionally, protect the extracellular space from toxic effect of reactive oxygen intermediates by converting superoxide radicals into hydrogen peroxide and oxygen. The protein is Extracellular superoxide dismutase [Cu-Zn] (Sod3) of Rattus norvegicus (Rat).